We begin with the raw amino-acid sequence, 413 residues long: uncharacterized protein (413 aa).

This is an uncharacterized protein from Mycobacterium tuberculosis (strain CDC 1551 / Oshkosh).